We begin with the raw amino-acid sequence, 373 residues long: UDP-N-acetylenolpyruvoylglucosamine reductase (373 aa).

An FAD-binding PCMH-type domain is found at 30 to 203; sequence LACTANSVVT…SRVGFRLHTD (174 aa). Arg-180 is a catalytic residue. Ser-258 (proton donor) is an active-site residue. Glu-356 is an active-site residue.

Belongs to the MurB family. FAD serves as cofactor.

The protein localises to the cytoplasm. It carries out the reaction UDP-N-acetyl-alpha-D-muramate + NADP(+) = UDP-N-acetyl-3-O-(1-carboxyvinyl)-alpha-D-glucosamine + NADPH + H(+). It participates in cell wall biogenesis; peptidoglycan biosynthesis. Functionally, cell wall formation. In Psychrobacter arcticus (strain DSM 17307 / VKM B-2377 / 273-4), this protein is UDP-N-acetylenolpyruvoylglucosamine reductase.